Here is a 220-residue protein sequence, read N- to C-terminus: Elongation factor Ts (220 aa).

An involved in Mg(2+) ion dislocation from EF-Tu region spans residues 83 to 86 (TDFV).

The protein belongs to the EF-Ts family.

Its subcellular location is the cytoplasm. Associates with the EF-Tu.GDP complex and induces the exchange of GDP to GTP. It remains bound to the aminoacyl-tRNA.EF-Tu.GTP complex up to the GTP hydrolysis stage on the ribosome. This is Elongation factor Ts from Synechococcus sp. (strain CC9605).